Reading from the N-terminus, the 218-residue chain is Mitochondrial import inner membrane translocase subunit TIM17-1 (218 aa).

The next 4 helical transmembrane spans lie at 19–36 (VGGA…YHLI), 66–82 (FSVW…ALVY), 89–105 (PWNS…FLSL), and 116–133 (ALVG…GIML).

The protein belongs to the Tim17/Tim22/Tim23 family. As to quaternary structure, component of the TIM17:23 complex at least composed of TIM23, TIM17 and TIM50. The complex interacts with the TIM44 component of the PAM complex. Expressed in flowers, leaves and cotyledons, and at very low levels in roots.

It is found in the mitochondrion inner membrane. Its function is as follows. Essential component of the TIM17:23 complex, a complex that mediates the translocation of transit peptide-containing proteins across the mitochondrial inner membrane. Links the inner and outer membranes. This is Mitochondrial import inner membrane translocase subunit TIM17-1 (TIM17-1) from Arabidopsis thaliana (Mouse-ear cress).